Consider the following 220-residue polypeptide: Exodeoxyribonuclease 10 (220 aa).

It depends on Mg(2+) as a cofactor.

Its function is as follows. Capable of degrading both single-strand and double-strand DNA with 3' to 5' polarity. Has higher affinity for ssDNA ends than for dsDNA. This chain is Exodeoxyribonuclease 10 (exoX), found in Escherichia coli O6:H1 (strain CFT073 / ATCC 700928 / UPEC).